The primary structure comprises 78 residues: Acyl carrier protein (78 aa).

The Carrier domain maps to 2–77; that stretch reads STIEERVKKI…AAIDFIQANQ (76 aa). The residue at position 37 (S37) is an O-(pantetheine 4'-phosphoryl)serine.

The protein belongs to the acyl carrier protein (ACP) family. 4'-phosphopantetheine is transferred from CoA to a specific serine of apo-ACP by AcpS. This modification is essential for activity because fatty acids are bound in thioester linkage to the sulfhydryl of the prosthetic group.

The protein resides in the cytoplasm. It participates in lipid metabolism; fatty acid biosynthesis. Carrier of the growing fatty acid chain in fatty acid biosynthesis. The chain is Acyl carrier protein from Pectobacterium atrosepticum (strain SCRI 1043 / ATCC BAA-672) (Erwinia carotovora subsp. atroseptica).